The chain runs to 733 residues: Serine/threonine-protein kinase ATG1c (733 aa).

The 258-residue stretch at 12–269 folds into the Protein kinase domain; the sequence is YLVGRQIGSG…FEEFFNHPFL (258 aa). Residues 18 to 26 and lysine 41 contribute to the ATP site; that span reads IGSGSFSVV. Residue aspartate 134 is the Proton acceptor of the active site. 2 disordered regions span residues 292 to 363 and 379 to 414; these read SSGS…ELTS and FETQ…SQDS. Residues 329–339 are compositionally biased toward polar residues; the sequence is KKTSSMKSSSG. Basic and acidic residues-rich tracts occupy residues 342 to 360 and 379 to 393; these read VDTR…KHTE and FETQ…RREP. The AIM (Atg8-family-interacting motif) motif lies at 419-422; sequence FVLV. 2 disordered regions span residues 565 to 596 and 713 to 733; these read GSPS…SHDG and HRRS…NRQS. Residues 566–577 show a composition bias toward polar residues; that stretch reads SPSQDINKLRSS. The span at 579–596 shows a compositional bias: basic and acidic residues; it reads LKHDTHSSNKVTDLSHDG. Over residues 717-733 the composition is skewed to polar residues; sequence SAGQMQGSSLAMMNRQS.

It belongs to the protein kinase superfamily. Ser/Thr protein kinase family.

The protein resides in the cytoplasmic vesicle. It is found in the autophagosome. Serine/threonine protein kinase involved in autophagy. The ATG1-ATG13 protein kinase complex regulates downstream events required for autophagosome enclosure and/or vacuolar delivery. This is Serine/threonine-protein kinase ATG1c from Arabidopsis thaliana (Mouse-ear cress).